A 97-amino-acid chain; its full sequence is Protein GLUTAMINE DUMPER 7 (97 aa).

The Extracellular segment spans residues 1-25; that stretch reads MSLHRDSMVPVNSRLENMDSPILSK. A helical transmembrane segment spans residues 26–46; sequence ICAWGVMLGLFALSLFAMAYA. Over 47 to 97 the chain is Cytoplasmic; that stretch reads CYHKQTSNSCIEEKQGKKQVLKPLDMEPKIVVIMAGNENPTFFAKPTQINA. Residues 78–82 carry the VIMAG motif; the sequence is VIMAG.

It belongs to the GLUTAMINE DUMPER 1 (TC 9.B.60) family. In terms of tissue distribution, expressed in the vascular tissues, even in the minor veins of the leaves.

Its subcellular location is the membrane. Functionally, probable subunit of an amino acid transporter involved in the regulation of the amino acid metabolism. Stimulates amino acid export by activating nonselective amino acid facilitators. The polypeptide is Protein GLUTAMINE DUMPER 7 (GDU7) (Arabidopsis thaliana (Mouse-ear cress)).